The primary structure comprises 155 residues: Small ribosomal subunit protein uS7c (155 aa).

Belongs to the universal ribosomal protein uS7 family. As to quaternary structure, part of the 30S ribosomal subunit.

The protein localises to the plastid. It localises to the chloroplast. Its function is as follows. One of the primary rRNA binding proteins, it binds directly to 16S rRNA where it nucleates assembly of the head domain of the 30S subunit. The sequence is that of Small ribosomal subunit protein uS7c (rps7) from Coelogyne cristata (Orchid).